The sequence spans 142 residues: Class II hydrophobin 7 (142 aa).

Residues 1 to 16 (MKFLTVAIVLAAAASA) form the signal peptide. 4 disulfides stabilise this stretch: Cys-73-Cys-123, Cys-84-Cys-114, Cys-85-Cys-97, and Cys-124-Cys-135.

It belongs to the cerato-ulmin hydrophobin family. Homodimer. Homodimers further self-assemble to form highly ordered films at water-air interfaces through intermolecular interactions.

Its subcellular location is the secreted. It is found in the cell wall. In terms of biological role, aerial growth, conidiation, and dispersal of filamentous fungi in the environment rely upon a capability of their secreting small amphipathic proteins called hydrophobins (HPBs) with low sequence identity. Class I can self-assemble into an outermost layer of rodlet bundles on aerial cell surfaces, conferring cellular hydrophobicity that supports fungal growth, development and dispersal; whereas Class II form highly ordered films at water-air interfaces through intermolecular interactions but contribute nothing to the rodlet structure. The sequence is that of Class II hydrophobin 7 from Trichoderma asperellum (strain ATCC 204424 / CBS 433.97 / NBRC 101777).